The primary structure comprises 366 residues: Phospho-N-acetylmuramoyl-pentapeptide-transferase (366 aa).

The next 10 membrane-spanning stretches (helical) occupy residues 3-23 (QIFI…PVLI), 55-75 (IAIL…GLVF), 80-100 (PGVS…VGFA), 118-138 (AKLI…LQFP), 161-181 (IAVG…NIVI), 197-217 (LASG…FWQF), 235-255 (PLDL…FLWW), 262-282 (IFMG…LSIT), 287-307 (LLMI…VIQV), and 341-361 (FWLL…GEWL).

It belongs to the glycosyltransferase 4 family. MraY subfamily. Mg(2+) serves as cofactor.

The protein resides in the cell membrane. It catalyses the reaction UDP-N-acetyl-alpha-D-muramoyl-L-alanyl-gamma-D-glutamyl-meso-2,6-diaminopimeloyl-D-alanyl-D-alanine + di-trans,octa-cis-undecaprenyl phosphate = di-trans,octa-cis-undecaprenyl diphospho-N-acetyl-alpha-D-muramoyl-L-alanyl-D-glutamyl-meso-2,6-diaminopimeloyl-D-alanyl-D-alanine + UMP. The protein operates within cell wall biogenesis; peptidoglycan biosynthesis. Functionally, catalyzes the initial step of the lipid cycle reactions in the biosynthesis of the cell wall peptidoglycan: transfers peptidoglycan precursor phospho-MurNAc-pentapeptide from UDP-MurNAc-pentapeptide onto the lipid carrier undecaprenyl phosphate, yielding undecaprenyl-pyrophosphoryl-MurNAc-pentapeptide, known as lipid I. The polypeptide is Phospho-N-acetylmuramoyl-pentapeptide-transferase (Corynebacterium urealyticum (strain ATCC 43042 / DSM 7109)).